The sequence spans 470 residues: Glutamate--tRNA ligase 1 (470 aa).

A 'HIGH' region motif is present at residues 15–25 (PSPTGTMHIGT). The short motif at 241–245 (KLSKR) is the 'KMSKS' region element. Lys-244 serves as a coordination point for ATP.

This sequence belongs to the class-I aminoacyl-tRNA synthetase family. Glutamate--tRNA ligase type 1 subfamily. As to quaternary structure, monomer.

It localises to the cytoplasm. The catalysed reaction is tRNA(Glu) + L-glutamate + ATP = L-glutamyl-tRNA(Glu) + AMP + diphosphate. In terms of biological role, catalyzes the attachment of glutamate to tRNA(Glu) in a two-step reaction: glutamate is first activated by ATP to form Glu-AMP and then transferred to the acceptor end of tRNA(Glu). In Jannaschia sp. (strain CCS1), this protein is Glutamate--tRNA ligase 1.